The chain runs to 356 residues: MTAAKIKVLCVDDSALIRSLMTEIINSQPDMEVVGTAPDPLVAREMIKQLNPDVLTLDVEMPRMDGLDFLERLMRLRPMPVLMVSSLTERGSEITMRALELGAVDFVTKPKLGIRDGLMEYTDTIADKIRAASRARVRQAPQAASGTPATPMLRSPLLSTEKLIILGASTGGTEAIKDFLMPLPPDSPAVLIVQHMPAGFTRSFAQRLDGLCRITVKEAEHGERVLPGYAYIAPGDSHLRLARSGANYVAHLSQEAPVNRHRPSVDVLFDSAAEHGGKNVIGVILTGMGKDGAKGMLRMREAGAYNLAQDESTCIVFGMPKEAIAAGGVHEVVPLHSMTQRVMARLATYGTRAQRV.

Residues 7 to 124 (KVLCVDDSAL…RDGLMEYTDT (118 aa)) enclose the Response regulatory domain. D58 carries the post-translational modification 4-aspartylphosphate. Positions 157–349 (LLSTEKLIIL…QRVMARLATY (193 aa)) constitute a CheB-type methylesterase domain. Active-site residues include S169, H195, and D291.

The protein belongs to the CheB family. Post-translationally, phosphorylated by CheA. Phosphorylation of the N-terminal regulatory domain activates the methylesterase activity.

The protein resides in the cytoplasm. It catalyses the reaction [protein]-L-glutamate 5-O-methyl ester + H2O = L-glutamyl-[protein] + methanol + H(+). The enzyme catalyses L-glutaminyl-[protein] + H2O = L-glutamyl-[protein] + NH4(+). Functionally, involved in chemotaxis. Part of a chemotaxis signal transduction system that modulates chemotaxis in response to various stimuli. Catalyzes the demethylation of specific methylglutamate residues introduced into the chemoreceptors (methyl-accepting chemotaxis proteins or MCP) by CheR. Also mediates the irreversible deamidation of specific glutamine residues to glutamic acid. The protein is Protein-glutamate methylesterase/protein-glutamine glutaminase 2 of Cupriavidus pinatubonensis (strain JMP 134 / LMG 1197) (Cupriavidus necator (strain JMP 134)).